The primary structure comprises 428 residues: Enolase (428 aa).

Glutamine 163 is a (2R)-2-phosphoglycerate binding site. Glutamate 205 acts as the Proton donor in catalysis. Positions 243, 286, and 313 each coordinate Mg(2+). (2R)-2-phosphoglycerate contacts are provided by lysine 338, arginine 367, serine 368, and lysine 389. Lysine 338 acts as the Proton acceptor in catalysis.

Belongs to the enolase family. Mg(2+) is required as a cofactor.

Its subcellular location is the cytoplasm. The protein localises to the secreted. It is found in the cell surface. It catalyses the reaction (2R)-2-phosphoglycerate = phosphoenolpyruvate + H2O. Its pathway is carbohydrate degradation; glycolysis; pyruvate from D-glyceraldehyde 3-phosphate: step 4/5. Its function is as follows. Catalyzes the reversible conversion of 2-phosphoglycerate (2-PG) into phosphoenolpyruvate (PEP). It is essential for the degradation of carbohydrates via glycolysis. The polypeptide is Enolase (Polaromonas naphthalenivorans (strain CJ2)).